Reading from the N-terminus, the 205-residue chain is Holliday junction branch migration complex subunit RuvA (205 aa).

Residues 1-64 (MIGRLRGTLA…EDAHLLYGFA (64 aa)) are domain I. Residues 65–143 (EKRERELFRE…AWETSPAMFT (79 aa)) form a domain II region. The tract at residues 144–154 (LVSDGPLPVAS) is flexible linker. The tract at residues 154–205 (SESSAEADAVSALVSLGYKPQEASKAIAAIKDKAGLSSEELIRRSLKGMISK) is domain III.

The protein belongs to the RuvA family. Homotetramer. Forms an RuvA(8)-RuvB(12)-Holliday junction (HJ) complex. HJ DNA is sandwiched between 2 RuvA tetramers; dsDNA enters through RuvA and exits via RuvB. An RuvB hexamer assembles on each DNA strand where it exits the tetramer. Each RuvB hexamer is contacted by two RuvA subunits (via domain III) on 2 adjacent RuvB subunits; this complex drives branch migration. In the full resolvosome a probable DNA-RuvA(4)-RuvB(12)-RuvC(2) complex forms which resolves the HJ.

The protein resides in the cytoplasm. Functionally, the RuvA-RuvB-RuvC complex processes Holliday junction (HJ) DNA during genetic recombination and DNA repair, while the RuvA-RuvB complex plays an important role in the rescue of blocked DNA replication forks via replication fork reversal (RFR). RuvA specifically binds to HJ cruciform DNA, conferring on it an open structure. The RuvB hexamer acts as an ATP-dependent pump, pulling dsDNA into and through the RuvAB complex. HJ branch migration allows RuvC to scan DNA until it finds its consensus sequence, where it cleaves and resolves the cruciform DNA. In Pseudomonas putida (strain ATCC 47054 / DSM 6125 / CFBP 8728 / NCIMB 11950 / KT2440), this protein is Holliday junction branch migration complex subunit RuvA.